Consider the following 1194-residue polypeptide: Multidrug efflux ATP-binding/permease protein Rv0194 (1194 aa).

6 consecutive transmembrane segments (helical) span residues 20 to 40 (LLLGFGAALAGTVIAVLVPLV), 56 to 76 (LAPWAVVLVAAAGATYLLMYV), 130 to 150 (LLFDVPNVLRHVLTLLLGVAV), 153 to 173 (WLSVPLALLAVLLVPVIGLIA), 258 to 278 (FALGGWMAAQGSITVGTFVAF), and 279 to 299 (WACLTLLARPACDLAGMLTIA). The ABC transmembrane type-1 1 domain occupies 21-301 (LLGFGAALAG…LAGMLTIAQQ (281 aa)). The 235-residue stretch at 334–568 (LEFQRVSFGY…CPRYRELLSP (235 aa)) folds into the ABC transporter 1 domain. An ATP-binding site is contributed by 367-374 (GAPGSGKS). 6 helical membrane-spanning segments follow: residues 628 to 648 (ALSLLLVAVQTCAGLLPPLLI), 660 to 680 (VLSALWWAALAGTATVVIRWV), 743 to 763 (LVVAVISVVTLVGILVALLAI), 765 to 785 (ARLVLLIFTTMPVLALATWQF), 847 to 867 (LLALYYPFVALLCSLATTLVL), and 878 to 898 (VISVGALVTYLLYIELLYTPI). In terms of domain architecture, ABC transmembrane type-1 2 spans 628–910 (ALSLLLVAVQ…LAQMFDDYQR (283 aa)). The region spanning 942 to 1177 (VVFDAVHYSY…GGHYSRLWAA (236 aa)) is the ABC transporter 2 domain. 976–983 (GSTGSGKS) provides a ligand contact to ATP.

It belongs to the ABC transporter superfamily. Lipid exporter (TC 3.A.1.106) family.

It localises to the cell inner membrane. Its activity is regulated as follows. Efflux is inhibited by reserpine. In terms of biological role, overexpression in M.smegmatis increases resistance to erythromycin, ampicillin, novobiocin and vancomycin. It also reduces accumulation of ethidium bromide in the cell. This is Multidrug efflux ATP-binding/permease protein Rv0194 from Mycobacterium tuberculosis (strain ATCC 25618 / H37Rv).